A 218-amino-acid polypeptide reads, in one-letter code: MDKSGSPNASRTSRRRRPRRGSRSASGADAGLRALTQQMLRLNKTLAIGRPTLNHPTFVGSESCKPGYTFTSITLKPPEIEKGSYFGRRLSLPDSVTDYDKKLVSRIQIRINPLPKFDSTVWVTVRKVPSSSDLSVAAISAMFGDGNSPVLVYQYAASGVQANNKLLYDLSEMRADIGDMRKYAVLVYSKDDKLEKDEIVLHVDVEHQRIPISRMLPT.

Position 1 is an N-acetylmethionine; by host (Met1). The interval Met1–Ala30 is disordered. The span at Thr12–Ser22 shows a compositional bias: basic residues.

The protein belongs to the cucumovirus capsid protein family.

Its subcellular location is the virion. In terms of biological role, capsid protein. Probably binds RNA and plays a role in packaging. The chain is Capsid protein from Cucumber mosaic virus (strain Q) (CMV).